The following is a 450-amino-acid chain: D-inositol 3-phosphate glycosyltransferase (450 aa).

A 1D-myo-inositol 3-phosphate-binding site is contributed by H21. UDP-N-acetyl-alpha-D-glucosamine contacts are provided by residues 27–28 (QP) and G35. 1D-myo-inositol 3-phosphate-binding positions include 32–37 (DAGGMN), K90, Y123, T147, and R167. R241, K246, and V307 together coordinate UDP-N-acetyl-alpha-D-glucosamine. Residues Y316, R317, and A319 each contribute to the Mg(2+) site. Positions 329 and 337 each coordinate UDP-N-acetyl-alpha-D-glucosamine. Residue T343 coordinates Mg(2+).

This sequence belongs to the glycosyltransferase group 1 family. MshA subfamily. Homodimer.

The catalysed reaction is 1D-myo-inositol 3-phosphate + UDP-N-acetyl-alpha-D-glucosamine = 1D-myo-inositol 2-acetamido-2-deoxy-alpha-D-glucopyranoside 3-phosphate + UDP + H(+). In terms of biological role, catalyzes the transfer of a N-acetyl-glucosamine moiety to 1D-myo-inositol 3-phosphate to produce 1D-myo-inositol 2-acetamido-2-deoxy-glucopyranoside 3-phosphate in the mycothiol biosynthesis pathway. In Geodermatophilus obscurus (strain ATCC 25078 / DSM 43160 / JCM 3152 / CCUG 61914 / KCC A-0152 / KCTC 9177 / NBRC 13315 / NRRL B-3577 / G-20), this protein is D-inositol 3-phosphate glycosyltransferase.